Reading from the N-terminus, the 236-residue chain is tRNA (guanine-N(1)-)-methyltransferase (236 aa).

Residues glycine 113 and 133 to 138 each bind S-adenosyl-L-methionine; that span reads IGDYVL.

This sequence belongs to the RNA methyltransferase TrmD family. As to quaternary structure, homodimer.

Its subcellular location is the cytoplasm. It carries out the reaction guanosine(37) in tRNA + S-adenosyl-L-methionine = N(1)-methylguanosine(37) in tRNA + S-adenosyl-L-homocysteine + H(+). Specifically methylates guanosine-37 in various tRNAs. This is tRNA (guanine-N(1)-)-methyltransferase from Lachnospira eligens (strain ATCC 27750 / DSM 3376 / VPI C15-48 / C15-B4) (Eubacterium eligens).